We begin with the raw amino-acid sequence, 207 residues long: FMN-dependent NADH:quinone oxidoreductase 3 (207 aa).

FMN is bound by residues S10 and 16–18 (SIS).

Belongs to the azoreductase type 1 family. In terms of assembly, homodimer. Requires FMN as cofactor.

The catalysed reaction is 2 a quinone + NADH + H(+) = 2 a 1,4-benzosemiquinone + NAD(+). It catalyses the reaction N,N-dimethyl-1,4-phenylenediamine + anthranilate + 2 NAD(+) = 2-(4-dimethylaminophenyl)diazenylbenzoate + 2 NADH + 2 H(+). Quinone reductase that provides resistance to thiol-specific stress caused by electrophilic quinones. In terms of biological role, also exhibits azoreductase activity. Catalyzes the reductive cleavage of the azo bond in aromatic azo compounds to the corresponding amines. This is FMN-dependent NADH:quinone oxidoreductase 3 from Burkholderia lata (strain ATCC 17760 / DSM 23089 / LMG 22485 / NCIMB 9086 / R18194 / 383).